Consider the following 202-residue polypeptide: Cilia- and flagella-associated protein 418 (202 aa).

Positions 71 to 90 (DVDTPTSTHEPSPAKASSSA) are disordered. Polar residues predominate over residues 74 to 90 (TPTSTHEPSPAKASSSA).

As to expression, ubiquitously expressed during early development and in adult tissues including the eye, brain, heart and kidney.

The protein resides in the cytoplasm. It localises to the photoreceptor inner segment. May be involved in photoreceptor outer segment disk morphogenesis. This is Cilia- and flagella-associated protein 418 (cfap418) from Danio rerio (Zebrafish).